The primary structure comprises 264 residues: Thymidylate synthase (264 aa).

Arg21 serves as a coordination point for dUMP. (6R)-5,10-methylene-5,6,7,8-tetrahydrofolate is bound at residue His51. 126–127 is a dUMP binding site; the sequence is RR. Cys146 functions as the Nucleophile in the catalytic mechanism. DUMP-binding positions include 166–169, Asn177, and 207–209; these read RSAD and HIY. (6R)-5,10-methylene-5,6,7,8-tetrahydrofolate is bound at residue Asp169. A (6R)-5,10-methylene-5,6,7,8-tetrahydrofolate-binding site is contributed by Ala263.

It belongs to the thymidylate synthase family. Bacterial-type ThyA subfamily. In terms of assembly, homodimer.

The protein localises to the cytoplasm. The catalysed reaction is dUMP + (6R)-5,10-methylene-5,6,7,8-tetrahydrofolate = 7,8-dihydrofolate + dTMP. Its pathway is pyrimidine metabolism; dTTP biosynthesis. In terms of biological role, catalyzes the reductive methylation of 2'-deoxyuridine-5'-monophosphate (dUMP) to 2'-deoxythymidine-5'-monophosphate (dTMP) while utilizing 5,10-methylenetetrahydrofolate (mTHF) as the methyl donor and reductant in the reaction, yielding dihydrofolate (DHF) as a by-product. This enzymatic reaction provides an intracellular de novo source of dTMP, an essential precursor for DNA biosynthesis. The polypeptide is Thymidylate synthase (Ruthia magnifica subsp. Calyptogena magnifica).